The sequence spans 238 residues: Major prion protein (238 aa).

Residues Met1–Cys15 form the signal peptide. Positions Lys16–Ser215 are interaction with GRB2, ERI3 and SYN1. Residues Arg18–Ser93 form a disordered region. 4 tandem repeats follow at residues Pro44–Gln52, Pro53–Gln60, Pro61–Gln68, and Pro69–Gln76. Positions Pro44–Gln83 are 4 X 8 AA tandem repeats of P-H-G-G-G-W-G-Q. A compositionally biased stretch (gly residues) spans Gln45–Thr80. Cu(2+)-binding residues include Gly47, Gly48, His54, Gly55, Gly56, His62, Gly63, Gly64, His70, Gly71, and Gly72. The segment covering Gln83–Ser93 has biased composition (basic residues). Cysteines 164 and 199 form a disulfide. 2 N-linked (GlcNAc...) asparagine glycosylation sites follow: Asn166 and Asn182. Residue Ser215 is the site of GPI-anchor amidated serine attachment. The propeptide at Ser216–Gly238 is removed in mature form.

It belongs to the prion family. As to quaternary structure, monomer and homodimer. Has a tendency to aggregate into amyloid fibrils containing a cross-beta spine, formed by a steric zipper of superposed beta-strands. Soluble oligomers may represent an intermediate stage on the path to fibril formation. Copper binding may promote oligomerization. Interacts with GRB2, APP, ERI3/PRNPIP and SYN1. Mislocalized cytosolically exposed PrP interacts with MGRN1; this interaction alters MGRN1 subcellular location and causes lysosomal enlargement. Interacts with KIAA1191.

Its subcellular location is the cell membrane. The protein localises to the golgi apparatus. Its primary physiological function is unclear. Has cytoprotective activity against internal or environmental stresses. May play a role in neuronal development and synaptic plasticity. May be required for neuronal myelin sheath maintenance. May play a role in iron uptake and iron homeostasis. Soluble oligomers are toxic to cultured neuroblastoma cells and induce apoptosis (in vitro). Association with GPC1 (via its heparan sulfate chains) targets PRNP to lipid rafts. Also provides Cu(2+) or Zn(2+) for the ascorbate-mediated GPC1 deaminase degradation of its heparan sulfate side chains. The protein is Major prion protein (PRNP) of Theropithecus gelada (Gelada baboon).